The chain runs to 740 residues: Rho GTPase-activating protein 92B (740 aa).

A BAR domain is found at 13 to 246; the sequence is ENLSRSSKSD…IQDTIQGTEK (234 aa). Residues 49–74 form a disordered region; it reads LPALSGGGGSGSGSSEEQDKRTKKNS. Residues 251-448 enclose the Rho-GAP domain; sequence TSLKEHLTST…LLISQWDYFF (198 aa). Residues 467–740 are disordered; the sequence is GKSKSNSSNE…PPPTNWKSSD (274 aa). Phosphoserine occurs at positions 469 and 473. Positions 506–520 are enriched in polar residues; sequence TTNGNGIIMTTSQTS. Positions 566–577 are enriched in pro residues; sequence PLPPPPVTPAKP. The residue at position 593 (S593) is a Phosphoserine. Residue T595 is modified to Phosphothreonine. Positions 643 to 655 are enriched in polar residues; it reads TTPTQATIDNGNG. Residues 659-672 are compositionally biased toward basic and acidic residues; sequence FKTEHFLDKLRQEN. Positions 673-686 are enriched in polar residues; that stretch reads GETNGTREVSSTTK. Residues 694–713 show a composition bias toward low complexity; sequence PPATAADQNQQQAQPQVTTP. Position 715 is a phosphoserine (S715). At T721 the chain carries Phosphothreonine. Pro residues predominate over residues 725–734; that stretch reads PTVPAPPPPT. Phosphoserine occurs at positions 738 and 739.

In terms of biological role, GTPase activator for the Rho-type GTPases by converting them to an inactive GDP-bound state. In Drosophila melanogaster (Fruit fly), this protein is Rho GTPase-activating protein 92B (RhoGAP92B).